The chain runs to 195 residues: ATP-dependent Clp protease proteolytic subunit (195 aa).

Ser-96 functions as the Nucleophile in the catalytic mechanism. Residue His-121 is part of the active site.

Belongs to the peptidase S14 family. In terms of assembly, fourteen ClpP subunits assemble into 2 heptameric rings which stack back to back to give a disk-like structure with a central cavity, resembling the structure of eukaryotic proteasomes.

It localises to the cytoplasm. The enzyme catalyses Hydrolysis of proteins to small peptides in the presence of ATP and magnesium. alpha-casein is the usual test substrate. In the absence of ATP, only oligopeptides shorter than five residues are hydrolyzed (such as succinyl-Leu-Tyr-|-NHMec, and Leu-Tyr-Leu-|-Tyr-Trp, in which cleavage of the -Tyr-|-Leu- and -Tyr-|-Trp bonds also occurs).. In terms of biological role, cleaves peptides in various proteins in a process that requires ATP hydrolysis. Has a chymotrypsin-like activity. Plays a major role in the degradation of misfolded proteins. The protein is ATP-dependent Clp protease proteolytic subunit of Elusimicrobium minutum (strain Pei191).